Here is a 239-residue protein sequence, read N- to C-terminus: Ribonuclease 3 (239 aa).

Positions 18-141 (YTTLEKALGY…LMAGVYLEAG (124 aa)) constitute an RNase III domain. Glu-54 contributes to the Mg(2+) binding site. Asp-58 is a catalytic residue. Residues Ser-127 and Glu-130 each coordinate Mg(2+). The active site involves Glu-130. Residues 168–237 (DYKTALQELT…AYQALQKLKE (70 aa)) form the DRBM domain.

The protein belongs to the ribonuclease III family. As to quaternary structure, homodimer. Requires Mg(2+) as cofactor.

It localises to the cytoplasm. It carries out the reaction Endonucleolytic cleavage to 5'-phosphomonoester.. Functionally, digests double-stranded RNA. Involved in the processing of primary rRNA transcript to yield the immediate precursors to the large and small rRNAs (23S and 16S). Processes some mRNAs, and tRNAs when they are encoded in the rRNA operon. Processes pre-crRNA and tracrRNA of type II CRISPR loci if present in the organism. The protein is Ribonuclease 3 of Helicobacter pylori (strain ATCC 700392 / 26695) (Campylobacter pylori).